The primary structure comprises 101 residues: MAAISREEVAHLARLSRLAVTEEELGTLAGQLDVILQAVAQVGEVTAADIPPTSHSVPLTNVLRDDVVAPCLSPQEALSGAPDAEEQRFRVPRILDEDVAS.

Residues 75 to 101 (QEALSGAPDAEEQRFRVPRILDEDVAS) form a disordered region. Residues 85–101 (EEQRFRVPRILDEDVAS) are compositionally biased toward basic and acidic residues.

This sequence belongs to the GatC family. In terms of assembly, heterotrimer of A, B and C subunits.

It carries out the reaction L-glutamyl-tRNA(Gln) + L-glutamine + ATP + H2O = L-glutaminyl-tRNA(Gln) + L-glutamate + ADP + phosphate + H(+). The catalysed reaction is L-aspartyl-tRNA(Asn) + L-glutamine + ATP + H2O = L-asparaginyl-tRNA(Asn) + L-glutamate + ADP + phosphate + 2 H(+). Functionally, allows the formation of correctly charged Asn-tRNA(Asn) or Gln-tRNA(Gln) through the transamidation of misacylated Asp-tRNA(Asn) or Glu-tRNA(Gln) in organisms which lack either or both of asparaginyl-tRNA or glutaminyl-tRNA synthetases. The reaction takes place in the presence of glutamine and ATP through an activated phospho-Asp-tRNA(Asn) or phospho-Glu-tRNA(Gln). The sequence is that of Aspartyl/glutamyl-tRNA(Asn/Gln) amidotransferase subunit C from Salinispora arenicola (strain CNS-205).